The primary structure comprises 363 residues: Putative agmatine deiminase 1 (363 aa).

Cys356 acts as the Amidino-cysteine intermediate in catalysis.

The protein belongs to the agmatine deiminase family.

It carries out the reaction agmatine + H2O = N-carbamoylputrescine + NH4(+). This chain is Putative agmatine deiminase 1, found in Listeria monocytogenes serovar 1/2a (strain ATCC BAA-679 / EGD-e).